Reading from the N-terminus, the 225-residue chain is Probable polyketide biosynthesis zinc-dependent hydrolase PksB (225 aa).

Positions 62, 64, 66, 67, 123, 140, and 181 each coordinate Zn(2+).

It belongs to the metallo-beta-lactamase superfamily. Requires Zn(2+) as cofactor.

The protein resides in the cytoplasm. Its pathway is antibiotic biosynthesis; bacillaene biosynthesis. Functionally, probably involved in some intermediate steps for the synthesis of the antibiotic polyketide bacillaene which is involved in secondary metabolism. This is Probable polyketide biosynthesis zinc-dependent hydrolase PksB (pksB) from Bacillus subtilis (strain 168).